Reading from the N-terminus, the 189-residue chain is Elongation factor P (189 aa).

The protein belongs to the elongation factor P family.

It is found in the cytoplasm. It participates in protein biosynthesis; polypeptide chain elongation. Involved in peptide bond synthesis. Stimulates efficient translation and peptide-bond synthesis on native or reconstituted 70S ribosomes in vitro. Probably functions indirectly by altering the affinity of the ribosome for aminoacyl-tRNA, thus increasing their reactivity as acceptors for peptidyl transferase. This is Elongation factor P from Rhizobium etli (strain ATCC 51251 / DSM 11541 / JCM 21823 / NBRC 15573 / CFN 42).